We begin with the raw amino-acid sequence, 38 residues long: Esterase-5 (38 aa).

Residues 1 to 38 (SAAADPLIVELPNGKVRGRDNEGYYEAEGIPRAEPPVG) form a disordered region.

It belongs to the type-B carboxylesterase/lipase family.

It catalyses the reaction a carboxylic ester + H2O = an alcohol + a carboxylate + H(+). The polypeptide is Esterase-5 (Est-5) (Drosophila mojavensis (Fruit fly)).